A 742-amino-acid polypeptide reads, in one-letter code: Probable serine/threonine-protein kinase PkwA (742 aa).

In terms of domain architecture, Protein kinase spans 16-266 (YRLVSRLGAG…TAELLAQLST (251 aa)). Residues 22-30 (LGAGGMGQV) and K44 contribute to the ATP site. D138 (proton acceptor) is an active-site residue. Residues 266–394 (TDHTGDDWPP…PWSPPRVQPP (129 aa)) form a disordered region. Over residues 301–318 (EPPPPSHGPPRPSEPLPD) the composition is skewed to pro residues. Residues 343–356 (LEEKPIQVIHEPER) are compositionally biased toward basic and acidic residues. The span at 377–392 (PRPAAPQPPWSPPRVQ) shows a compositional bias: pro residues. WD repeat units follow at residues 455-496 (ILTT…ELHT), 497-538 (LEGH…ERAV), 539-580 (FEGH…EHAV), 581-621 (LKGH…KERD), 622-663 (VLQA…ALHT), 664-705 (FEGH…EHTT), and 706-742 (LEGH…IATE).

Belongs to the protein kinase superfamily. Ser/Thr protein kinase family.

It catalyses the reaction L-seryl-[protein] + ATP = O-phospho-L-seryl-[protein] + ADP + H(+). The catalysed reaction is L-threonyl-[protein] + ATP = O-phospho-L-threonyl-[protein] + ADP + H(+). Its function is as follows. May play a regulatory role during the complex growth cycle and in secondary metabolite production. This is Probable serine/threonine-protein kinase PkwA (pkwA) from Thermomonospora curvata.